Here is a 332-residue protein sequence, read N- to C-terminus: Acetyl-coenzyme A carboxylase carboxyl transferase subunit alpha (332 aa).

The region spanning 44-298 (QLESRAQNLR…KETLVNNLEE (255 aa)) is the CoA carboxyltransferase C-terminal domain.

This sequence belongs to the AccA family. Acetyl-CoA carboxylase is a heterohexamer composed of biotin carboxyl carrier protein (AccB), biotin carboxylase (AccC) and two subunits each of ACCase subunit alpha (AccA) and ACCase subunit beta (AccD).

The protein resides in the cytoplasm. It carries out the reaction N(6)-carboxybiotinyl-L-lysyl-[protein] + acetyl-CoA = N(6)-biotinyl-L-lysyl-[protein] + malonyl-CoA. Its pathway is lipid metabolism; malonyl-CoA biosynthesis; malonyl-CoA from acetyl-CoA: step 1/1. In terms of biological role, component of the acetyl coenzyme A carboxylase (ACC) complex. First, biotin carboxylase catalyzes the carboxylation of biotin on its carrier protein (BCCP) and then the CO(2) group is transferred by the carboxyltransferase to acetyl-CoA to form malonyl-CoA. The sequence is that of Acetyl-coenzyme A carboxylase carboxyl transferase subunit alpha from Crocosphaera subtropica (strain ATCC 51142 / BH68) (Cyanothece sp. (strain ATCC 51142)).